A 395-amino-acid chain; its full sequence is DNA polymerase IV (395 aa).

The UmuC domain occupies Phe-7–Gly-187. The Mg(2+) site is built by Asp-11 and Asp-105. Residue Glu-106 is part of the active site.

This sequence belongs to the DNA polymerase type-Y family. Monomer. Mg(2+) is required as a cofactor.

Its subcellular location is the cytoplasm. It catalyses the reaction DNA(n) + a 2'-deoxyribonucleoside 5'-triphosphate = DNA(n+1) + diphosphate. Poorly processive, error-prone DNA polymerase involved in untargeted mutagenesis. Copies undamaged DNA at stalled replication forks, which arise in vivo from mismatched or misaligned primer ends. These misaligned primers can be extended by PolIV. Exhibits no 3'-5' exonuclease (proofreading) activity. May be involved in translesional synthesis, in conjunction with the beta clamp from PolIII. This is DNA polymerase IV from Treponema denticola (strain ATCC 35405 / DSM 14222 / CIP 103919 / JCM 8153 / KCTC 15104).